The following is a 276-amino-acid chain: Elongation factor Ts (276 aa).

The involved in Mg(2+) ion dislocation from EF-Tu stretch occupies residues 76–79 (TDFV).

It belongs to the EF-Ts family.

The protein localises to the cytoplasm. In terms of biological role, associates with the EF-Tu.GDP complex and induces the exchange of GDP to GTP. It remains bound to the aminoacyl-tRNA.EF-Tu.GTP complex up to the GTP hydrolysis stage on the ribosome. The protein is Elongation factor Ts of Mycobacterium leprae (strain Br4923).